A 129-amino-acid chain; its full sequence is Cuticle protein 12.5 (129 aa).

Tandem repeats lie at residues 7 to 10 (AAPA), 15 to 18 (AAPA), 23 to 26 (AAPA), 28 to 31 (AAPV), 37 to 40 (AAPA), 67 to 70 (AAPA), 79 to 82 (AAPA), 91 to 94 (AAPA), 103 to 106 (AAPA), and 117 to 120 (AAPA).

Component of the cuticle of migratory locust which contains more than 100 different structural proteins. The chain is Cuticle protein 12.5 from Locusta migratoria (Migratory locust).